Here is a 234-residue protein sequence, read N- to C-terminus: ASEGNGRGPYVQADLAYAYEHITHDYPEQTGTKKDKISTVSDYFRNIRTHSIHPRVSVGYDFGGWRIAADYARYRKWNDNKYSVDIKELENKNQNKRDLKTENQENGTFHAVSSLGLSAVYDFKLNGKFKPYIGARVAYGHVRHSIDSTKKTTKFLTSSYGGLNPTVYTEENTQNAHHQSNSIRRVGLGVIAGVGFDITPKLTLDTGYRYHYWGRLENTRFKTHEASLGVRYRF.

A signal peptide is located at residue A1.

The protein belongs to the opacity porin family.

It localises to the cell outer membrane. Implicated in a number of adherence functions. OPA proteins are implicated in pathogenesis and are subject to phase variation. This Neisseria gonorrhoeae protein is Opacity protein opA51 (opaB).